We begin with the raw amino-acid sequence, 384 residues long: Queuine tRNA-ribosyltransferase (384 aa).

D92 serves as the catalytic Proton acceptor. Substrate-binding positions include 92 to 96 (DSGGF), D146, Q192, and G219. The tract at residues 250–256 (GVGTPAE) is RNA binding. Catalysis depends on D269, which acts as the Nucleophile. Positions 274–278 (TRNAR) are RNA binding; important for wobble base 34 recognition. The Zn(2+) site is built by C307, C309, C312, and H338.

Belongs to the queuine tRNA-ribosyltransferase family. As to quaternary structure, homodimer. Within each dimer, one monomer is responsible for RNA recognition and catalysis, while the other monomer binds to the replacement base PreQ1. The cofactor is Zn(2+).

It carries out the reaction 7-aminomethyl-7-carbaguanine + guanosine(34) in tRNA = 7-aminomethyl-7-carbaguanosine(34) in tRNA + guanine. It participates in tRNA modification; tRNA-queuosine biosynthesis. Its function is as follows. Catalyzes the base-exchange of a guanine (G) residue with the queuine precursor 7-aminomethyl-7-deazaguanine (PreQ1) at position 34 (anticodon wobble position) in tRNAs with GU(N) anticodons (tRNA-Asp, -Asn, -His and -Tyr). Catalysis occurs through a double-displacement mechanism. The nucleophile active site attacks the C1' of nucleotide 34 to detach the guanine base from the RNA, forming a covalent enzyme-RNA intermediate. The proton acceptor active site deprotonates the incoming PreQ1, allowing a nucleophilic attack on the C1' of the ribose to form the product. After dissociation, two additional enzymatic reactions on the tRNA convert PreQ1 to queuine (Q), resulting in the hypermodified nucleoside queuosine (7-(((4,5-cis-dihydroxy-2-cyclopenten-1-yl)amino)methyl)-7-deazaguanosine). This chain is Queuine tRNA-ribosyltransferase, found in Desulfosudis oleivorans (strain DSM 6200 / JCM 39069 / Hxd3) (Desulfococcus oleovorans).